Consider the following 146-residue polypeptide: MATFHRAHATSSVKPRARRHQEPNSGDWPGSYRAGTRCSAIGFRLLHSPQHWRPRSLGAGQGREDPSWEGGALGDLKALWDQPCQPPPWVQLQLSSAYGARQQRWQLSTLPEPPAARTPGQMPQQRLIRAAGPSAAGGGNQWLSPM.

2 disordered regions span residues 1-33 (MATFHRAHATSSVKPRARRHQEPNSGDWPGSYR) and 50-70 (QHWRPRSLGAGQGREDPSWEG).

This is an uncharacterized protein from Homo sapiens (Human).